Reading from the N-terminus, the 237-residue chain is MSQPIYKRILLKLSGEALQGEDGLGIDPAILDRMAVEIKELVEMGVEVSVVLGGGNLFRGAKLAKAGMNRVVGDHMGMLATVMNGLAMRDSLFRADVNAKLMSAFQLNGICDTYNWSEAIKMLREKRVVIFSAGTGNPFFTTDSTACLRGIEIEADVVLKATKVDGVYDCDPAKNPDAKLYKNLSYAEVIDKELKVMDLSAFTLARDHGMPIRVFNMGKPGALRQVVTGTEEGTTIC.

12–15 (KLSG) contacts ATP. Residues 20-25 (GEDGLG) form an involved in allosteric activation by GTP region. Glycine 54 is a binding site for UMP. The ATP site is built by glycine 55 and arginine 59. UMP is bound by residues aspartate 74 and 135–142 (TGNPFFTT). Threonine 162, tyrosine 168, and aspartate 171 together coordinate ATP.

It belongs to the UMP kinase family. In terms of assembly, homohexamer.

It localises to the cytoplasm. The catalysed reaction is UMP + ATP = UDP + ADP. It functions in the pathway pyrimidine metabolism; CTP biosynthesis via de novo pathway; UDP from UMP (UMPK route): step 1/1. Its activity is regulated as follows. Allosterically activated by GTP. Inhibited by UTP. Functionally, catalyzes the reversible phosphorylation of UMP to UDP. The protein is Uridylate kinase (pyrH) of Haemophilus influenzae (strain ATCC 51907 / DSM 11121 / KW20 / Rd).